The sequence spans 191 residues: Protein GrpE (191 aa).

Belongs to the GrpE family. Homodimer.

The protein localises to the cytoplasm. Functionally, participates actively in the response to hyperosmotic and heat shock by preventing the aggregation of stress-denatured proteins, in association with DnaK and GrpE. It is the nucleotide exchange factor for DnaK and may function as a thermosensor. Unfolded proteins bind initially to DnaJ; upon interaction with the DnaJ-bound protein, DnaK hydrolyzes its bound ATP, resulting in the formation of a stable complex. GrpE releases ADP from DnaK; ATP binding to DnaK triggers the release of the substrate protein, thus completing the reaction cycle. Several rounds of ATP-dependent interactions between DnaJ, DnaK and GrpE are required for fully efficient folding. The polypeptide is Protein GrpE (Helicobacter pylori (strain P12)).